The sequence spans 1135 residues: Potassium channel subfamily T member 2 (1135 aa).

Residues 1-63 (MVDLESEVPP…KNQRSSLRIR (63 aa)) are Cytoplasmic-facing. The chain crosses the membrane as a helical span at residues 64–84 (LFNFSLKLLSCLLYIIRVLLE). Residues 85-101 (NPSQGNEWSHIFWVNRS) are Extracellular-facing. Asparagine 99 is a glycosylation site (N-linked (GlcNAc...) asparagine). The chain crosses the membrane as a helical span at residues 102 to 122 (LPLWGLQVSVALISLFETILL). Over 123–137 (GYLSYKGNIWEQILR) the chain is Cytoplasmic. The helical transmembrane segment at 138 to 158 (IPFILEIINAVPFIISIFWPS) threads the bilayer. Topologically, residues 159-164 (LRNLFV) are extracellular. The helical transmembrane segment at 165 to 185 (PVFLNCWLAKHALENMINDLH) threads the bilayer. At 186–198 (RAIQRTQSAMFNQ) the chain is on the cytoplasmic side. A helical transmembrane segment spans residues 199–219 (VLILISTLLCLIFTCICGIQH). The Extracellular portion of the chain corresponds to 220–228 (LERIGKKLN). The pore-forming intramembrane region spans 229–249 (LFDSLYFCIVTFSTVGFGDVT). The Extracellular portion of the chain corresponds to 250–256 (PETWSSK). The helical transmembrane segment at 257 to 277 (LFVVAMICVALVVLPIQFEQL) threads the bilayer. At 278–1135 (AYLWMERQKS…GQDSREETQL (858 aa)) the chain is on the cytoplasmic side. RCK N-terminal domains lie at 299-435 (EKHV…DHVV) and 718-858 (NKLI…CYSL). Disordered stretches follow at residues 977 to 1010 (VEEW…HPLL), 1017 to 1036 (WARR…AEKI), and 1113 to 1135 (SEPS…ETQL). Over residues 1017-1030 (WARRLSRKGPKHSG) the composition is skewed to basic residues. Positions 1118–1127 (RNSICNVTGQ) are enriched in polar residues.

The protein belongs to the potassium channel family. Calcium-activated (TC 1.A.1.3) subfamily. KCa4.2/KCNT2 sub-subfamily. Homotetramer. Forms heteromeric channels with KCNT1; these heterodimer channels differ from the homomers in their unitary conductance, kinetic behavior, subcellular localization, and response to activation of protein kinase C. Post-translationally, phosphorylated by protein kinase C. Phosphorylation of the C-terminal domain inhibits channel activity.

It is found in the cell membrane. The catalysed reaction is K(+)(in) = K(+)(out). Are normally in a closed state unless activated by an increase in intracellular Na(+) and Cl(-). Inhibited upon stimulation of G-protein coupled receptors, such as CHRM1 and GRM1. There is conflicting data about the effect of ATP on KNCT2 channels activity. Intracellular ATP was initially report to inhibit the channel activity. However, others studies conclude that KNCT2 channels are not inhibited by intracellular ATP. Sodium-activated and chloride-activated potassium channel. Produces rapidly activating outward rectifier K(+) currents. Contributes to regulate neuronal excitability. The protein is Potassium channel subfamily T member 2 (KCNT2) of Homo sapiens (Human).